Here is a 202-residue protein sequence, read N- to C-terminus: NAD(P)H dehydrogenase (quinone) (202 aa).

Residues 7-193 (VLVLYYSMYG…TIARFQGRHF (187 aa)) enclose the Flavodoxin-like domain. Residues 13 to 18 (SMYGHI) and 82 to 84 (TRF) contribute to the FMN site. Tyr15 contributes to the NAD(+) binding site. Position 102 (Trp102) interacts with substrate. Residues 117-122 (STATGG) and His137 each bind FMN.

It belongs to the WrbA family. FMN is required as a cofactor.

It catalyses the reaction a quinone + NADH + H(+) = a quinol + NAD(+). The enzyme catalyses a quinone + NADPH + H(+) = a quinol + NADP(+). This Rhodospirillum rubrum (strain ATCC 11170 / ATH 1.1.1 / DSM 467 / LMG 4362 / NCIMB 8255 / S1) protein is NAD(P)H dehydrogenase (quinone).